Consider the following 463-residue polypeptide: Adenosylhomocysteinase (463 aa).

Positions 54, 129, and 189 each coordinate substrate. Residue 190-192 (TTT) participates in NAD(+) binding. Residues Lys-219 and Asp-223 each coordinate substrate. NAD(+) contacts are provided by residues Asn-224, 253 to 258 (GYGDVG), Glu-276, Asn-311, 332 to 334 (IGH), and Asn-377.

This sequence belongs to the adenosylhomocysteinase family. NAD(+) is required as a cofactor.

The protein localises to the cytoplasm. The catalysed reaction is S-adenosyl-L-homocysteine + H2O = L-homocysteine + adenosine. It participates in amino-acid biosynthesis; L-homocysteine biosynthesis; L-homocysteine from S-adenosyl-L-homocysteine: step 1/1. May play a key role in the regulation of the intracellular concentration of adenosylhomocysteine. The sequence is that of Adenosylhomocysteinase from Caulobacter vibrioides (strain ATCC 19089 / CIP 103742 / CB 15) (Caulobacter crescentus).